The sequence spans 166 residues: Signal peptidase complex catalytic subunit SEC11 (166 aa).

Residues 1–9 (MNIRQQITQ) lie on the Cytoplasmic side of the membrane. Residues 10–30 (FLSLAYVFSSAFMLWKTLSVI) traverse the membrane as a helical; Signal-anchor for type II membrane protein segment. Residues 31-166 (ANSHSPIVVV…LGLSSLFSNE (136 aa)) are Lumenal-facing. Residues serine 44, histidine 83, and aspartate 108 each act as charge relay system in the active site. The C-terminal short (CTS) helix stretch occupies residues 152-163 (GMLGLLGLSSLF).

It belongs to the peptidase S26B family. In terms of assembly, component of the signal peptidase complex (SPC) composed of a catalytic subunit SEC11 and three accessory subunits SPC1, SPC2 and SPC3. The complex induces a local thinning of the ER membrane which is used to measure the length of the signal peptide (SP) h-region of protein substrates. This ensures the selectivity of the complex towards h-regions shorter than 18-20 amino acids. SPC associates with the translocon complex.

Its subcellular location is the endoplasmic reticulum membrane. It carries out the reaction Cleavage of hydrophobic, N-terminal signal or leader sequences from secreted and periplasmic proteins.. Functionally, catalytic component of the signal peptidase complex (SPC) which catalyzes the cleavage of N-terminal signal sequences from nascent proteins as they are translocated into the lumen of the endoplasmic reticulum. Specifically cleaves N-terminal signal peptides that contain a hydrophobic alpha-helix (h-region) shorter than 18-20 amino acids. The polypeptide is Signal peptidase complex catalytic subunit SEC11 (SEC11) (Candida dubliniensis (strain CD36 / ATCC MYA-646 / CBS 7987 / NCPF 3949 / NRRL Y-17841) (Yeast)).